A 379-amino-acid chain; its full sequence is Chaperone protein DnaJ (379 aa).

A J domain is found at 7-72 (CYYETLEVER…DKRAAYDRYG (66 aa)). The CR-type zinc-finger motif lies at 135 to 213 (GKTAQIEIPV…CTGSGRVTKE (79 aa)). 8 residues coordinate Zn(2+): Cys148, Cys151, Cys165, Cys168, Cys187, Cys190, Cys201, and Cys204. CXXCXGXG motif repeat units lie at residues 148–155 (CEACSGTG), 165–172 (CSTCGGAG), 187–194 (CPSCQGRG), and 201–208 (CPSCTGSG).

The protein belongs to the DnaJ family. Homodimer. Zn(2+) is required as a cofactor.

The protein localises to the cytoplasm. In terms of biological role, participates actively in the response to hyperosmotic and heat shock by preventing the aggregation of stress-denatured proteins and by disaggregating proteins, also in an autonomous, DnaK-independent fashion. Unfolded proteins bind initially to DnaJ; upon interaction with the DnaJ-bound protein, DnaK hydrolyzes its bound ATP, resulting in the formation of a stable complex. GrpE releases ADP from DnaK; ATP binding to DnaK triggers the release of the substrate protein, thus completing the reaction cycle. Several rounds of ATP-dependent interactions between DnaJ, DnaK and GrpE are required for fully efficient folding. Also involved, together with DnaK and GrpE, in the DNA replication of plasmids through activation of initiation proteins. The polypeptide is Chaperone protein DnaJ (Rhodopseudomonas palustris (strain ATCC BAA-98 / CGA009)).